We begin with the raw amino-acid sequence, 972 residues long: Aminopeptidase Ey (972 aa).

Topologically, residues 2-10 (AAGFFISKS) are cytoplasmic. Residues 11–31 (VGIVGIVLALGAVATIIALSV) traverse the membrane as a helical; Signal-anchor for type II membrane protein segment. Residues 32–972 (VYAQEKNKSS…AWFRAETASS (941 aa)) are Extracellular-facing. Positions 33–72 (YAQEKNKSSGGSGGSDTTSTTTASTTTTSTTTASTTAAPN) are cytosolic Ser/Thr-rich junction. A disordered region spans residues 37–77 (KNKSSGGSGGSDTTSTTTASTTTTSTTTASTTAAPNNPWNR). Residue Asn-38 is glycosylated (N-linked (GlcNAc...) asparagine). Low complexity predominate over residues 47 to 70 (SDTTSTTTASTTTTSTTTASTTAA). Residues 73 to 967 (NPWNRWRLPT…KEVVHAWFRA (895 aa)) form a metalloprotease region. N-linked (GlcNAc...) asparagine glycosylation is found at Asn-110, Asn-132, Asn-147, Asn-206, Asn-269, and Asn-296. Position 355 to 359 (355 to 359 (GAMEN)) interacts with substrate. Position 391 (His-391) interacts with Zn(2+). Glu-392 (proton acceptor) is an active-site residue. His-395 and Glu-414 together coordinate Zn(2+). Asn-513, Asn-574, Asn-584, Asn-628, Asn-684, and Asn-742 each carry an N-linked (GlcNAc...) asparagine glycan. The cysteines at positions 764 and 771 are disulfide-linked. Asn-785 carries an N-linked (GlcNAc...) asparagine glycan. An intrachain disulfide couples Cys-801 to Cys-837.

Belongs to the peptidase M1 family. Homodimer. Requires Zn(2+) as cofactor. As to expression, detected in the plasma and granule fractions of egg yolk (at protein level).

It localises to the cell membrane. The enzyme catalyses Differs from other aminopeptidases in broad specificity for amino acids in the P1 position and the ability to hydrolyze peptides of four or five residues that contain Pro in the P1' position.. Its function is as follows. Broad specificity aminopeptidase. Degrades a variety of peptides possessing various N-terminal amino acids including hydrophobic, basic and acidic amino acids. Preferentially hydrolyzes small peptides consisting of 4 or 5 amino acids. Hydrolyzes the N-terminal Xaa-Pro bonds in the chicken brain peptide Leu-Pro-Leu-Arg-PheNH2, the substance P fragment Arg-Pro-Lys-Pro and the bradykinin fragment Arg-Pro-Pro-Gly-Phe. Hydrolyzes the N-formylated peptides fMet-Leu-Phe, fMet-Ala-Gly-Ser-Glu and fMet-Nle-Leu-Phe-Nle-Tyr-Lys, but does not hydrolyze peptides with acetylation or pyroglutamic acid at N-terminus. Does not hydrolyze large peptides such as complete substance P, bradykinin or schistoFLRFamide. This chain is Aminopeptidase Ey (ANPEP), found in Gallus gallus (Chicken).